Here is a 1679-residue protein sequence, read N- to C-terminus: Protein MLP2 (1679 aa).

Coiled coils occupy residues 32 to 176 (AKFE…KYDT), 233 to 466 (YNKF…RQVK), 516 to 1064 (FSNV…EREL), and 1099 to 1491 (KLVS…ENAG). Short sequence motifs (bipartite nuclear localization signal) lie at residues 417–433 (KRSTELLETVSLTKRKQ), 639–655 (RKELLIYKKSQCKKKTT), and 1433–1449 (KKEWLKEYEDETLRRIK). Disordered regions lie at residues 1495 to 1521 (FLDNKGSGEDAEEELWNSPSKGNSERP) and 1632 to 1679 (DLTN…ASNE). Composition is skewed to polar residues over residues 1511-1520 (NSPSKGNSER) and 1646-1661 (IGSTSKRPIESGTSSD). Ser1512 carries the post-translational modification Phosphoserine. Residues 1662 to 1671 (PDTKKVKESP) show a composition bias toward basic and acidic residues. Ser1670 bears the Phosphoserine mark.

Component of the nuclear complex (NPC). NPC constitutes the exclusive means of nucleocytoplasmic transport. NPCs allow the passive diffusion of ions and small molecules and the active, nuclear transport receptor-mediated bidirectional transport of macromolecules such as proteins, RNAs, ribonucleoparticles (RNPs), and ribosomal subunits across the nuclear envelope. Due to its 8-fold rotational symmetry, all subunits are present with 8 copies or multiples thereof. Interacts with NUP60 and NIC96, which tether it to the nuclear pore complex. Component of the spindle pole body core in which it interacts directly with SPC110, SPC42 and SPC29. Also interacts with YKU70 (HDF1) and MLP1.

Its subcellular location is the nucleus. It is found in the cytoplasm. The protein localises to the cytoskeleton. The protein resides in the microtubule organizing center. It localises to the spindle pole body. Its subcellular location is the nuclear pore complex. In terms of biological role, together with the closely related MLP1, involved in the structural and functional organization of perinuclear chromatin. MLP1/MLP2 associate with the nuclear pore complex and form filamentous structures along the nuclear periphery. Has a role in the localization of Esc1 to nucleolar regions. Together with MLP1, mediates tethering of the some telomeres to the nuclear periphery, probably mediated by YKU70/YKU80 (HDF1/HDF2) heterodimer and show perinuclear location dependent silencing. MLP1 and MLP2 are involved in telomere length regulation but not silencing or telomere anchoring. Plays a role in the incorporation of components into the spindle pole body. Involved in double-strand break repair, probably also mediated by the YKU70/YKU80 (HDF1/HDF2) heterodimer. The sequence is that of Protein MLP2 (MLP2) from Saccharomyces cerevisiae (strain ATCC 204508 / S288c) (Baker's yeast).